The sequence spans 256 residues: Ribosomal RNA large subunit methyltransferase E (256 aa).

Gly50, Trp52, Asp69, Asp85, and Asp108 together coordinate S-adenosyl-L-methionine. Lys148 serves as the catalytic Proton acceptor. The 59-residue stretch at 195–253 (SLRKGDVVDVTIDAMGKTGDGIAHVDDFVVFVKGGSVGDKLKIKITDVKPSFAFADIVE) folds into the TRAM domain.

The protein belongs to the class I-like SAM-binding methyltransferase superfamily. RNA methyltransferase RlmE family.

Its subcellular location is the cytoplasm. The enzyme catalyses uridine(2552) in 23S rRNA + S-adenosyl-L-methionine = 2'-O-methyluridine(2552) in 23S rRNA + S-adenosyl-L-homocysteine + H(+). Functionally, specifically methylates the uridine in position 2552 of 23S rRNA at the 2'-O position of the ribose in the fully assembled 50S ribosomal subunit. The chain is Ribosomal RNA large subunit methyltransferase E from Methanocella arvoryzae (strain DSM 22066 / NBRC 105507 / MRE50).